The sequence spans 357 residues: 3-isopropylmalate dehydrogenase, chloroplastic (357 aa).

Residues 1-29 constitute a chloroplast transit peptide; sequence MALQIAKRLLRCRADSVASSVRFFDRTFT. 4 residues coordinate substrate: Arg-120, Arg-130, Arg-151, and Asp-238. Positions 238, 262, and 266 each coordinate Mg(2+). Position 296-308 (296-308) interacts with NAD(+); the sequence is GSAPDIAGKNLAN.

This sequence belongs to the isocitrate and isopropylmalate dehydrogenases family. Homodimer. Mg(2+) serves as cofactor. It depends on Mn(2+) as a cofactor.

Its subcellular location is the plastid. It is found in the chloroplast. The enzyme catalyses (2R,3S)-3-isopropylmalate + NAD(+) = 4-methyl-2-oxopentanoate + CO2 + NADH. Its pathway is amino-acid biosynthesis; L-leucine biosynthesis; L-leucine from 3-methyl-2-oxobutanoate: step 3/4. In terms of biological role, catalyzes the oxidation of 3-carboxy-2-hydroxy-4-methylpentanoate (3-isopropylmalate) to 3-carboxy-4-methyl-2-oxopentanoate. The product decarboxylates to 4-methyl-2 oxopentanoate. This chain is 3-isopropylmalate dehydrogenase, chloroplastic, found in Solanum tuberosum (Potato).